Reading from the N-terminus, the 136-residue chain is Transcription antitermination protein NusB (136 aa).

Belongs to the NusB family.

Involved in transcription antitermination. Required for transcription of ribosomal RNA (rRNA) genes. Binds specifically to the boxA antiterminator sequence of the ribosomal RNA (rrn) operons. This is Transcription antitermination protein NusB from Treponema denticola (strain ATCC 35405 / DSM 14222 / CIP 103919 / JCM 8153 / KCTC 15104).